We begin with the raw amino-acid sequence, 286 residues long: Phospholipase A1 (286 aa).

Positions 1 to 20 (MRISLACLAALCALPAGVMA) are cleaved as a signal peptide. At 21 to 49 (QDASVHDKPAVRGSIIANLLQDHDNPFLL) the chain is on the periplasmic side. Residues 50–62 (YPYESNYLLYTWT) traverse the membrane as a beta stranded segment. Topologically, residues 63-81 (SDLNKEAIRSYDWAENARK) are extracellular. The beta stranded transmembrane segment at 82–96 (DEVKFQLSLAFPLWR) threads the bilayer. At 97-102 (GILGDN) the chain is on the periplasmic side. The chain crosses the membrane as a beta stranded span at residues 103–115 (SLLGASYTQKSWW). The Extracellular segment spans residues 116 to 125 (QLSNSKESAP). Residue serine 123 participates in Ca(2+) binding. The chain crosses the membrane as a beta stranded span at residues 126 to 145 (FRETNYEPQLFLGFATDYQF). Topologically, residues 146–147 (AG) are periplasmic. Residues 148–161 (WTLRDIEMGYNHDS) traverse the membrane as a beta stranded segment. Residue histidine 159 is the Proton acceptor of the active site. Serine 161 functions as the Nucleophile in the catalytic mechanism. At 162–170 (NGRSDPTSR) the chain is on the extracellular side. The Ca(2+) site is built by arginine 164 and serine 169. Residues 171 to 183 (SWNRLYARLMAQN) form a beta stranded membrane-spanning segment. The Periplasmic segment spans residues 184–185 (GN). Residues 186–195 (WLVEVKPWYV) traverse the membrane as a beta stranded segment. The Extracellular segment spans residues 196–213 (VGSTDDNPDITKYMGYYR). Position 201 (aspartate 201) interacts with Ca(2+). Residues 214-220 (LKVGYQL) traverse the membrane as a beta stranded segment. Residues 221–222 (GE) lie on the Periplasmic side of the membrane. A beta stranded membrane pass occupies residues 223-231 (AILSAQGQY). Residues 232 to 238 (NWNTGYG) lie on the Extracellular side of the membrane. A beta stranded membrane pass occupies residues 239–247 (GAELGVSYP). The Periplasmic portion of the chain corresponds to 248-252 (ITKHV). Residues 253 to 262 (RAYTQIYSGY) form a beta stranded membrane-spanning segment. At 263 to 271 (GESLIDYNF) the chain is on the extracellular side. The beta stranded transmembrane segment at 272–283 (NQTRVGVGLMLN) threads the bilayer. Residues 284-286 (DLF) are Periplasmic-facing.

It belongs to the phospholipase A1 family. In terms of assembly, homodimer; dimerization is reversible, and the dimeric form is the active one. Ca(2+) is required as a cofactor.

Its subcellular location is the cell outer membrane. It carries out the reaction a 1,2-diacyl-sn-glycero-3-phosphocholine + H2O = a 2-acyl-sn-glycero-3-phosphocholine + a fatty acid + H(+). The catalysed reaction is a 1,2-diacyl-sn-glycero-3-phosphocholine + H2O = a 1-acyl-sn-glycero-3-phosphocholine + a fatty acid + H(+). In terms of biological role, hydrolysis of phosphatidylcholine with phospholipase A2 (EC 3.1.1.4) and phospholipase A1 (EC 3.1.1.32) activities. This Klebsiella pneumoniae protein is Phospholipase A1 (pldA).